The following is a 428-amino-acid chain: Serine--tRNA ligase (428 aa).

233 to 235 (TAE) is a binding site for L-serine. 264–266 (RRE) lines the ATP pocket. Glu287 lines the L-serine pocket. 351–354 (EVSS) lines the ATP pocket. Ser387 contributes to the L-serine binding site.

Belongs to the class-II aminoacyl-tRNA synthetase family. Type-1 seryl-tRNA synthetase subfamily. In terms of assembly, homodimer. The tRNA molecule binds across the dimer.

The protein resides in the cytoplasm. It catalyses the reaction tRNA(Ser) + L-serine + ATP = L-seryl-tRNA(Ser) + AMP + diphosphate + H(+). It carries out the reaction tRNA(Sec) + L-serine + ATP = L-seryl-tRNA(Sec) + AMP + diphosphate + H(+). Its pathway is aminoacyl-tRNA biosynthesis; selenocysteinyl-tRNA(Sec) biosynthesis; L-seryl-tRNA(Sec) from L-serine and tRNA(Sec): step 1/1. Catalyzes the attachment of serine to tRNA(Ser). Is also able to aminoacylate tRNA(Sec) with serine, to form the misacylated tRNA L-seryl-tRNA(Sec), which will be further converted into selenocysteinyl-tRNA(Sec). This Salinibacter ruber (strain DSM 13855 / M31) protein is Serine--tRNA ligase.